Consider the following 149-residue polypeptide: Endoribonuclease YbeY (149 aa).

Residues His-106, His-110, and His-116 each coordinate Zn(2+).

This sequence belongs to the endoribonuclease YbeY family. Zn(2+) serves as cofactor.

It is found in the cytoplasm. Single strand-specific metallo-endoribonuclease involved in late-stage 70S ribosome quality control and in maturation of the 3' terminus of the 16S rRNA. This Methylobacillus flagellatus (strain ATCC 51484 / DSM 6875 / VKM B-1610 / KT) protein is Endoribonuclease YbeY.